Here is a 485-residue protein sequence, read N- to C-terminus: U4/U6 small nuclear ribonucleoprotein Prp31 homolog (485 aa).

2 disordered regions span residues 1–36 and 329–361; these read MATL…EEDV and IEKW…RRLR. Over residues 11–36 the composition is skewed to acidic residues; it reads DLDELSDNEAELDENDGDVGKEEEDV. The region spanning 216–334 is the Nop domain; the sequence is IAPNLSAIVG…IRKKIEKWQE (119 aa). Positions 334–348 are enriched in pro residues; it reads EPPPARQPKPLPVPD. The segment covering 352 to 361 has biased composition (basic residues); the sequence is KKRRGGRRLR. Positions 352–365 match the Nuclear localization signal motif; it reads KKRRGGRRLRKMKE.

The protein belongs to the PRP31 family. Component of the U4/U6-U5 tri-snRNP complex composed of the U4, U6 and U5 snRNAs and pre-mRNA-splicing factors. Interacts with STA1 and SOP1.

The protein localises to the nucleus. It is found in the cajal body. Involved in pre-mRNA splicing. Required for the assembly of the U4/U5/U6 tri-snRNP complex, one of the building blocks of the spliceosome. Functions in association with STA1 and ZOP1 in spliceosome dynamics and pre-mRNA splicing. Required for transcriptional regulation and pre-mRNA splicing of cold-responsive genes, such as LTI78/RD29A, KIN2/COR6.6 or COR15A, especially under cold stress. May play a role in stress response. Involved in transcriptional gene silencing of endogenous transposable elements, independently of the RNA-directed DNA methylation (RdDM) pathway. Seems not to participate in the small RNA biogenesis of the RdDM pathway. In Arabidopsis thaliana (Mouse-ear cress), this protein is U4/U6 small nuclear ribonucleoprotein Prp31 homolog.